The chain runs to 202 residues: Orotate phosphoribosyltransferase (202 aa).

Residues K93 and 113–121 each bind 5-phospho-alpha-D-ribose 1-diphosphate; that span reads EDIITTGGS. Orotate is bound by residues T117 and R145.

Belongs to the purine/pyrimidine phosphoribosyltransferase family. PyrE subfamily. As to quaternary structure, homodimer. Mg(2+) serves as cofactor.

The enzyme catalyses orotidine 5'-phosphate + diphosphate = orotate + 5-phospho-alpha-D-ribose 1-diphosphate. It participates in pyrimidine metabolism; UMP biosynthesis via de novo pathway; UMP from orotate: step 1/2. Its function is as follows. Catalyzes the transfer of a ribosyl phosphate group from 5-phosphoribose 1-diphosphate to orotate, leading to the formation of orotidine monophosphate (OMP). The sequence is that of Orotate phosphoribosyltransferase from Campylobacter jejuni subsp. doylei (strain ATCC BAA-1458 / RM4099 / 269.97).